The sequence spans 149 residues: DnaJ homolog subfamily C member 24 (149 aa).

The 72-residue stretch at 11-82 (DWYSILGADP…ETKKEYDLQR (72 aa)) folds into the J domain. One can recognise a DPH-type MB domain in the interval 93–148 (VDARIYLEEMSWNEDDHSFSLSCRCGGKYSVSKDEAEEVTLISCDTCSLIIELLHY). The Zn(2+) site is built by C115, C117, C136, and C139.

This sequence belongs to the DPH4 family. In terms of assembly, monomer and homooligomer. Iron binding promotes oligomerization.

The protein localises to the cytoplasm. Its subcellular location is the cytoskeleton. The protein operates within protein modification; peptidyl-diphthamide biosynthesis. Its function is as follows. Stimulates the ATPase activity of several Hsp70-type chaperones. This ability is enhanced by iron-binding. The iron-bound form is redox-active and can function as electron carrier. Plays a role in the diphthamide biosynthesis, a post-translational modification of histidine which occurs in translation elongation factor 2 (EEF2). In Bos taurus (Bovine), this protein is DnaJ homolog subfamily C member 24 (DNAJC24).